A 373-amino-acid polypeptide reads, in one-letter code: Indole glucosinolate O-methyltransferase 4 (373 aa).

Positions 217, 240, 260, 261, and 274 each coordinate S-adenosyl-L-homocysteine. Catalysis depends on histidine 278, which acts as the Proton acceptor.

This sequence belongs to the class I-like SAM-binding methyltransferase superfamily. Cation-independent O-methyltransferase family. As to quaternary structure, interacts with B'GAMMA.

The protein operates within secondary metabolite biosynthesis. Involved in indole glucosinolate biosynthesis. Catalyzes methoxylation reactions of the glucosinolate indole ring. Converts the hydroxy intermediates 4-hydroxy-indol-3-yl-methylglucosinolate (4OH-I3M) and 1-hydroxy-indol-3-yl-methylglucosinolate (1OH-I3M) to 4-methoxy-indol-3-yl-methylglucosinolate (4MO-I3M) and 1-methoxy-indol-3-yl-methylglucosinolate(1MO-I3M), respectively. The polypeptide is Indole glucosinolate O-methyltransferase 4 (Arabidopsis thaliana (Mouse-ear cress)).